The sequence spans 951 residues: Leucine-rich repeat-containing G-protein coupled receptor 4 (951 aa).

Positions 1–24 (MPGPLRLLCFFALGLLGSAGPSGA) are cleaved as a signal peptide. The LRRNT domain maps to 25 to 57 (APPLCAAPCSCDGDRRVDCSGKGLTAVPEGLSA). Residues 25–544 (APPLCAAPCS…LLGSWMIRLT (520 aa)) lie on the Extracellular side of the membrane. 2 cysteine pairs are disulfide-bonded: C29/C35 and C33/C43. LRR repeat units follow at residues 58 to 79 (FTQA…AFKS), 82 to 103 (FLEE…ALSG), 106 to 127 (ELKV…AIHG), 130 to 151 (ALQS…SFEG), 154 to 177 (QLRH…SNLP), 178 to 199 (TLQA…AFTN), 202 to 223 (SLVV…CFDG), 226 to 247 (NLET…IKAL), 249 to 270 (SLKE…AFGG), and 273 to 294 (LLRT…AFHN). N68 carries N-linked (GlcNAc...) asparagine glycosylation. N-linked (GlcNAc...) asparagine glycans are attached at residues N188 and N199. 2 N-linked (GlcNAc...) asparagine glycosylation sites follow: N294 and N314. LRR repeat units lie at residues 320 to 341 (HLES…LCQN), 344 to 365 (MLRT…NGCR), 366 to 387 (ALEE…TFQG), 390 to 411 (SLRI…AFAK), and 414 to 435 (TITN…GLNG). An intrachain disulfide couples C339 to C364. 2 disulfide bridges follow: C470-C522 and C471-C476. The N-linked (GlcNAc...) asparagine glycan is linked to N505. Residues 545–565 (VWFIFLVALLFNLLVILTVFA) traverse the membrane as a helical segment. Over 566-575 (SCSSLPASKL) the chain is Cytoplasmic. Residues 576–596 (FIGLISVSNLLMGIYTGILTF) traverse the membrane as a helical segment. At 597–619 (LDAVSWGRFAEFGIWWETGSGCK) the chain is on the extracellular side. C618 and C693 are disulfide-bonded. Residues 620 to 640 (VAGSLAVFSSESAVFLLTLAA) form a helical membrane-spanning segment. Residues 641-661 (VERSVFAKDLMKHGKSSHLRQ) are Cytoplasmic-facing. Residues 662-682 (FQVAALLALLGAAVAGCFPLF) form a helical membrane-spanning segment. Over 683-703 (HGGQYSASPLCLPFPTGETPS) the chain is Extracellular. A helical transmembrane segment spans residues 704–724 (LGFTVTLVLLNSLAFLLMAII). Residues 725–756 (YTKLYCNLEKEDLSENSQSSVIKHVAWLIFTN) are Cytoplasmic-facing. A helical transmembrane segment spans residues 757–777 (CIFFCPVAFFSFAPLITAISI). The Extracellular segment spans residues 778–783 (SPEIMK). Residues 784–804 (SVTLIFFPLPACLNPVLYVFF) form a helical membrane-spanning segment. The Cytoplasmic portion of the chain corresponds to 805–951 (NPKFKEDWKL…YAYNLQRVRD (147 aa)). S920 carries the phosphoserine modification.

Belongs to the G-protein coupled receptor 1 family.

It is found in the cell membrane. Receptor for R-spondins that potentiates the canonical Wnt signaling pathway and is involved in the formation of various organs. Upon binding to R-spondins (RSPO1, RSPO2, RSPO3 or RSPO4), associates with phosphorylated LRP6 and frizzled receptors that are activated by extracellular Wnt receptors, triggering the canonical Wnt signaling pathway to increase expression of target genes. In contrast to classical G-protein coupled receptors, does not activate heterotrimeric G-proteins to transduce the signal. Its function as activator of the Wnt signaling pathway is required for the development of various organs, including liver, kidney, intestine, bone, reproductive tract and eye. May also act as a receptor for norrin (NDP), such results however require additional confirmation in vivo. Required during spermatogenesis to activate the Wnt signaling pathway in peritubular myoid cells. Required for the maintenance of intestinal stem cells and Paneth cell differentiation in postnatal intestinal crypts. Acts as a regulator of bone formation and remodeling. Involved in kidney development; required for maintaining the ureteric bud in an undifferentiated state. Involved in the development of the anterior segment of the eye. Required during erythropoiesis. Also acts as a negative regulator of innate immunity by inhibiting TLR2/TLR4 associated pattern-recognition and pro-inflammatory cytokine production. Plays an important role in regulating the circadian rhythms of plasma lipids, partially through regulating the rhythmic expression of MTTP. Required for proper development of GnRH neurons (gonadotropin-releasing hormone expressing neurons) that control the release of reproductive hormones from the pituitary gland. In Rattus norvegicus (Rat), this protein is Leucine-rich repeat-containing G-protein coupled receptor 4 (Lgr4).